The sequence spans 407 residues: Expansin-like protein 2 (407 aa).

A signal peptide spans 1-23 (MKMKNFLSKSLLVLLIGLIGVKS). In terms of domain architecture, Expansin-like EG45 spans 42 to 141 (HGNCGYEQLT…KKVSCDVTGN (100 aa)). Disulfide bonds link Cys45-Cys75 and Cys78-Cys136. N-linked (GlcNAc...) asparagine glycosylation is found at Asn70, Asn117, and Asn387.

The protein belongs to the expansin family. Expansin A subfamily.

It is found in the secreted. Functionally, unlikely to encode with a protein with expansin activity. The protein is Expansin-like protein 2 (expl2) of Dictyostelium discoideum (Social amoeba).